The primary structure comprises 183 residues: Peptide deformylase (183 aa).

2 residues coordinate Fe cation: Cys110 and His153. Glu154 is an active-site residue. His157 contributes to the Fe cation binding site.

Belongs to the polypeptide deformylase family. Requires Fe(2+) as cofactor.

The enzyme catalyses N-terminal N-formyl-L-methionyl-[peptide] + H2O = N-terminal L-methionyl-[peptide] + formate. In terms of biological role, removes the formyl group from the N-terminal Met of newly synthesized proteins. Requires at least a dipeptide for an efficient rate of reaction. N-terminal L-methionine is a prerequisite for activity but the enzyme has broad specificity at other positions. This is Peptide deformylase from Listeria monocytogenes serotype 4a (strain HCC23).